The following is a 164-amino-acid chain: ATP synthase subunit b (164 aa).

The helical transmembrane segment at glycine 6–isoleucine 26 threads the bilayer.

The protein belongs to the ATPase B chain family. As to quaternary structure, F-type ATPases have 2 components, F(1) - the catalytic core - and F(0) - the membrane proton channel. F(1) has five subunits: alpha(3), beta(3), gamma(1), delta(1), epsilon(1). F(0) has three main subunits: a(1), b(2) and c(10-14). The alpha and beta chains form an alternating ring which encloses part of the gamma chain. F(1) is attached to F(0) by a central stalk formed by the gamma and epsilon chains, while a peripheral stalk is formed by the delta and b chains.

Its subcellular location is the cell membrane. Its function is as follows. F(1)F(0) ATP synthase produces ATP from ADP in the presence of a proton or sodium gradient. F-type ATPases consist of two structural domains, F(1) containing the extramembraneous catalytic core and F(0) containing the membrane proton channel, linked together by a central stalk and a peripheral stalk. During catalysis, ATP synthesis in the catalytic domain of F(1) is coupled via a rotary mechanism of the central stalk subunits to proton translocation. In terms of biological role, component of the F(0) channel, it forms part of the peripheral stalk, linking F(1) to F(0). The protein is ATP synthase subunit b of Streptococcus pneumoniae serotype 2 (strain D39 / NCTC 7466).